The primary structure comprises 197 residues: UPF0228 protein MA_3125 (197 aa).

The protein belongs to the UPF0228 family.

The sequence is that of UPF0228 protein MA_3125 from Methanosarcina acetivorans (strain ATCC 35395 / DSM 2834 / JCM 12185 / C2A).